Here is a 212-residue protein sequence, read N- to C-terminus: dITP/XTP pyrophosphatase (212 aa).

7–12 (SRNKKK) contacts substrate. D72 functions as the Proton acceptor in the catalytic mechanism. Position 72 (D72) interacts with Mg(2+). Substrate-binding positions include S73, 163-166 (FGYD), K187, and 192-193 (HR). The segment at 164–194 (GYDPLFEPAEAPGQSSAELTPERKDELSHRG) is disordered. A compositionally biased stretch (basic and acidic residues) spans 183 to 192 (TPERKDELSH).

This sequence belongs to the HAM1 NTPase family. In terms of assembly, homodimer. Mg(2+) is required as a cofactor.

It catalyses the reaction XTP + H2O = XMP + diphosphate + H(+). The enzyme catalyses dITP + H2O = dIMP + diphosphate + H(+). It carries out the reaction ITP + H2O = IMP + diphosphate + H(+). Pyrophosphatase that catalyzes the hydrolysis of nucleoside triphosphates to their monophosphate derivatives, with a high preference for the non-canonical purine nucleotides XTP (xanthosine triphosphate), dITP (deoxyinosine triphosphate) and ITP. Seems to function as a house-cleaning enzyme that removes non-canonical purine nucleotides from the nucleotide pool, thus preventing their incorporation into DNA/RNA and avoiding chromosomal lesions. This chain is dITP/XTP pyrophosphatase, found in Corynebacterium urealyticum (strain ATCC 43042 / DSM 7109).